A 511-amino-acid polypeptide reads, in one-letter code: Limonoid UDP-glucosyltransferase (511 aa).

The active-site Proton acceptor is the histidine 19. Histidine 19 lines the an anthocyanidin pocket. Residues glutamine 344, histidine 359, tryptophan 362, asparagine 363, serine 364, and glutamate 367 each contribute to the UDP-alpha-D-glucose site. Glycine 382 is a binding site for an anthocyanidin. UDP-alpha-D-glucose contacts are provided by aspartate 383 and glutamine 384.

It belongs to the UDP-glycosyltransferase family.

It catalyses the reaction limonin + UDP-alpha-D-glucose + H2O = limonin 17-beta-D-glucoside + UDP + 2 H(+). Its function is as follows. Involved in the glucosylation of limonoids. The polypeptide is Limonoid UDP-glucosyltransferase (Citrus unshiu (Satsuma mandarin)).